The sequence spans 230 residues: Urease accessory protein UreE (230 aa).

The span at 200-210 shows a compositional bias: basic residues; it reads HAIHSHGTGHT. The disordered stretch occupies residues 200–230; sequence HAIHSHGTGHTHSHDHDHSHSHGDHDHDHKH. The span at 211–230 shows a compositional bias: basic and acidic residues; that stretch reads HSHDHDHSHSHGDHDHDHKH.

Belongs to the UreE family.

The protein resides in the cytoplasm. Its function is as follows. Involved in urease metallocenter assembly. Binds nickel. Probably functions as a nickel donor during metallocenter assembly. The polypeptide is Urease accessory protein UreE (Yersinia enterocolitica serotype O:8 / biotype 1B (strain NCTC 13174 / 8081)).